Consider the following 716-residue polypeptide: Translation initiation factor IF-2 (716 aa).

Residues 50 to 136 are disordered; the sequence is YKKGGARAKS…VKPKKELPEK (87 aa). The segment covering 62–84 has biased composition (polar residues); that stretch reads PAETNKNKQPQGVNQQSAGNQPN. The segment covering 101-113 has biased composition (basic residues); it reads KNKKNNNNKKNKR. A compositionally biased stretch (low complexity) spans 114–126; the sequence is NNNNNKNQHQQKP. A tr-type G domain is found at 217–386; the sequence is IRPPVVTIMG…LLVSEVEELK (170 aa). The interval 226-233 is G1; the sequence is GHVDHGKT. A GTP-binding site is contributed by 226–233; sequence GHVDHGKT. The interval 251–255 is G2; that stretch reads GITQH. A G3 region spans residues 272–275; sequence DTPG. Residues 272 to 276 and 326 to 329 each bind GTP; these read DTPGH and NKID. Residues 326–329 form a G4 region; that stretch reads NKID. The G5 stretch occupies residues 362–364; the sequence is SAL.

The protein belongs to the TRAFAC class translation factor GTPase superfamily. Classic translation factor GTPase family. IF-2 subfamily.

It is found in the cytoplasm. In terms of biological role, one of the essential components for the initiation of protein synthesis. Protects formylmethionyl-tRNA from spontaneous hydrolysis and promotes its binding to the 30S ribosomal subunits. Also involved in the hydrolysis of GTP during the formation of the 70S ribosomal complex. The chain is Translation initiation factor IF-2 (infB) from Bacillus subtilis (strain 168).